Here is a 559-residue protein sequence, read N- to C-terminus: Sulfite reductase [NADPH] hemoprotein beta-component (559 aa).

[4Fe-4S] cluster is bound by residues C423, C429, C468, and C472. C472 is a binding site for siroheme.

This sequence belongs to the nitrite and sulfite reductase 4Fe-4S domain family. Alpha(8)-beta(8). The alpha component is a flavoprotein, the beta component is a hemoprotein. It depends on siroheme as a cofactor. Requires [4Fe-4S] cluster as cofactor.

It carries out the reaction hydrogen sulfide + 3 NADP(+) + 3 H2O = sulfite + 3 NADPH + 4 H(+). It participates in sulfur metabolism; hydrogen sulfide biosynthesis; hydrogen sulfide from sulfite (NADPH route): step 1/1. Component of the sulfite reductase complex that catalyzes the 6-electron reduction of sulfite to sulfide. This is one of several activities required for the biosynthesis of L-cysteine from sulfate. The sequence is that of Sulfite reductase [NADPH] hemoprotein beta-component from Thiocapsa roseopersicina.